Reading from the N-terminus, the 381-residue chain is Cytochrome b (381 aa).

The next 4 membrane-spanning stretches (helical) occupy residues 34-54 (FGSL…FLAM), 78-99 (WLIR…YLHI), 114-134 (WNIG…GYVL), and 179-199 (FFAF…IHLL). Residues His84 and His98 each coordinate heme b. Heme b-binding residues include His183 and His197. His202 contacts a ubiquinone. 4 helical membrane passes run 227–247 (YKDL…ALFL), 289–309 (LGGV…PMLH), 321–341 (MTQF…WIGG), and 348–368 (FILV…IIIP).

This sequence belongs to the cytochrome b family. As to quaternary structure, the cytochrome bc1 complex contains 3 respiratory subunits (MT-CYB, CYC1 and UQCRFS1), 2 core proteins (UQCRC1 and UQCRC2) and probably 6 low-molecular weight proteins. Heme b serves as cofactor.

The protein resides in the mitochondrion inner membrane. In terms of biological role, component of the ubiquinol-cytochrome c reductase complex (complex III or cytochrome b-c1 complex) that is part of the mitochondrial respiratory chain. The b-c1 complex mediates electron transfer from ubiquinol to cytochrome c. Contributes to the generation of a proton gradient across the mitochondrial membrane that is then used for ATP synthesis. This is Cytochrome b (mt-cyb) from Squalus acanthias (Spiny dogfish).